A 407-amino-acid chain; its full sequence is Large ribosomal subunit protein uL4y (407 aa).

A disordered region spans residues 57–96; the sequence is PYAVSKKAGHQTSAESWGTGRAVSRIPRVPGGGTHRAGQA.

The protein belongs to the universal ribosomal protein uL4 family.

The polypeptide is Large ribosomal subunit protein uL4y (RPL4D) (Arabidopsis thaliana (Mouse-ear cress)).